Here is a 341-residue protein sequence, read N- to C-terminus: UDP-3-O-acylglucosamine N-acyltransferase (341 aa).

H237 acts as the Proton acceptor in catalysis.

The protein belongs to the transferase hexapeptide repeat family. LpxD subfamily. Homotrimer.

The enzyme catalyses a UDP-3-O-[(3R)-3-hydroxyacyl]-alpha-D-glucosamine + a (3R)-hydroxyacyl-[ACP] = a UDP-2-N,3-O-bis[(3R)-3-hydroxyacyl]-alpha-D-glucosamine + holo-[ACP] + H(+). The protein operates within bacterial outer membrane biogenesis; LPS lipid A biosynthesis. Catalyzes the N-acylation of UDP-3-O-acylglucosamine using 3-hydroxyacyl-ACP as the acyl donor. Is involved in the biosynthesis of lipid A, a phosphorylated glycolipid that anchors the lipopolysaccharide to the outer membrane of the cell. In Azoarcus sp. (strain BH72), this protein is UDP-3-O-acylglucosamine N-acyltransferase.